A 152-amino-acid polypeptide reads, in one-letter code: Snaclec anticoagulant protein subunit A (152 aa).

Residues 1-23 form the signal peptide; sequence MGRFIFVSFGLLVVYLSLSGTAA. A C-type lectin domain is found at 24 to 152; sequence DCSSSWSSYE…EQRDPFVCEA (129 aa). 3 disulfides stabilise this stretch: C25–C36, C53–C150, and C125–C142. Residues S64, E66, and E70 each coordinate Ca(2+). A Ca(2+)-binding site is contributed by E151.

Belongs to the snaclec family. As to quaternary structure, heterodimer of subunits A and B; disulfide-linked. As to expression, expressed by the venom gland.

It localises to the secreted. Anticoagulant protein which binds to the gamma-carboxyglutamic acid-domain regions of factors IX and factor X in the presence of calcium with a 1 to 1 stoichiometry. Also inhibits platelet aggregation by binding to platelet glycoprotein Ibalpha (GP1BA) and functioning as a blocker of vWF. Is devoid of hemorrhagic and lethal activities. Possesses antithrombotic and thrombolytic activities. Also hydrolyzes the Aalpha-chain of fibrinogen. Does not affect the Bbeta-chain and the gamma chain. This chain is Snaclec anticoagulant protein subunit A, found in Deinagkistrodon acutus (Hundred-pace snake).